A 513-amino-acid polypeptide reads, in one-letter code: 2,3-bisphosphoglycerate-independent phosphoglycerate mutase (513 aa).

Asp-12 and Ser-62 together coordinate Mn(2+). Ser-62 (phosphoserine intermediate) is an active-site residue. Residues His-123, Arg-153–Asp-154, Arg-185, Arg-191, Arg-261–Arg-264, and Lys-335 contribute to the substrate site. Asp-402, His-406, Asp-443, His-444, and His-462 together coordinate Mn(2+).

This sequence belongs to the BPG-independent phosphoglycerate mutase family. Monomer. Mn(2+) serves as cofactor.

The enzyme catalyses (2R)-2-phosphoglycerate = (2R)-3-phosphoglycerate. It functions in the pathway carbohydrate degradation; glycolysis; pyruvate from D-glyceraldehyde 3-phosphate: step 3/5. Functionally, catalyzes the interconversion of 2-phosphoglycerate and 3-phosphoglycerate. This Thiobacillus denitrificans (strain ATCC 25259 / T1) protein is 2,3-bisphosphoglycerate-independent phosphoglycerate mutase.